The following is a 155-amino-acid chain: 6,7-dimethyl-8-ribityllumazine synthase (155 aa).

5-amino-6-(D-ribitylamino)uracil is bound by residues Phe22, 57-59 (AVE), and 81-83 (TVI). 86–87 (GT) is a binding site for (2S)-2-hydroxy-3-oxobutyl phosphate. His89 serves as the catalytic Proton donor. Phe114 contacts 5-amino-6-(D-ribitylamino)uracil. Arg128 contacts (2S)-2-hydroxy-3-oxobutyl phosphate.

It belongs to the DMRL synthase family. In terms of assembly, forms an icosahedral capsid composed of 60 subunits, arranged as a dodecamer of pentamers.

It carries out the reaction (2S)-2-hydroxy-3-oxobutyl phosphate + 5-amino-6-(D-ribitylamino)uracil = 6,7-dimethyl-8-(1-D-ribityl)lumazine + phosphate + 2 H2O + H(+). The protein operates within cofactor biosynthesis; riboflavin biosynthesis; riboflavin from 2-hydroxy-3-oxobutyl phosphate and 5-amino-6-(D-ribitylamino)uracil: step 1/2. Its function is as follows. Catalyzes the formation of 6,7-dimethyl-8-ribityllumazine by condensation of 5-amino-6-(D-ribitylamino)uracil with 3,4-dihydroxy-2-butanone 4-phosphate. This is the penultimate step in the biosynthesis of riboflavin. The chain is 6,7-dimethyl-8-ribityllumazine synthase from Psychromonas ingrahamii (strain DSM 17664 / CCUG 51855 / 37).